The sequence spans 273 residues: Mitochondrial distribution and morphology protein 12 (273 aa).

Positions 1-260 (MSFDINWEQL…WPSWINFDFY (260 aa)) constitute an SMP-LTD domain. The disordered stretch occupies residues 76 to 98 (MSAEEETEGSDDEGYGGDRVRNR). Acidic residues predominate over residues 78–90 (AEEETEGSDDEGY).

Belongs to the MDM12 family. Component of the ER-mitochondria encounter structure (ERMES) or MDM complex, composed of MMM1, MDM10, MDM12 and MDM34. An MMM1 homodimer associates with one molecule of MDM12 on each side in a pairwise head-to-tail manner, and the SMP-LTD domains of MMM1 and MDM12 generate a continuous hydrophobic tunnel for phospholipid trafficking.

Its subcellular location is the mitochondrion outer membrane. It is found in the endoplasmic reticulum membrane. Its function is as follows. Component of the ERMES/MDM complex, which serves as a molecular tether to connect the endoplasmic reticulum (ER) and mitochondria. Components of this complex are involved in the control of mitochondrial shape and protein biogenesis, and function in nonvesicular lipid trafficking between the ER and mitochondria. MDM12 is required for the interaction of the ER-resident membrane protein MMM1 and the outer mitochondrial membrane-resident beta-barrel protein MDM10. The MDM12-MMM1 subcomplex functions in the major beta-barrel assembly pathway that is responsible for biogenesis of all mitochondrial outer membrane beta-barrel proteins, and acts in a late step after the SAM complex. The MDM10-MDM12-MMM1 subcomplex further acts in the TOM40-specific pathway after the action of the MDM12-MMM1 complex. Essential for establishing and maintaining the structure of mitochondria and maintenance of mtDNA nucleoids. This is Mitochondrial distribution and morphology protein 12 from Vanderwaltozyma polyspora (strain ATCC 22028 / DSM 70294 / BCRC 21397 / CBS 2163 / NBRC 10782 / NRRL Y-8283 / UCD 57-17) (Kluyveromyces polysporus).